The following is a 35-amino-acid chain: Z-limacoditoxin(1)-Dv1 (35 aa).

The first 22 residues, 1–22, serve as a signal peptide directing secretion; sequence MKKTFLPIFLVILLASYALANP. Glutamine 23 is modified (pyrrolidone carboxylic acid). A Proline amide modification is found at proline 32.

The protein belongs to the limacoditoxin-1 (ACP-like) family. As to expression, expressed by the venom secretory cell of the spine. The spine is a cuticular structure containing a single large nucleated venom-secreting cell at its base. It is an independent unit capable of producing, storing and injecting venom. On the back of D.vulnerans caterpillars, spines are grouped together by 50 to 100 to form scoli, of which there are eight in D.vulnerans.

The protein resides in the secreted. Functionally, potently activates insect G protein-coupled receptor. It activates the ACP receptor (ACPR) from the mosquito A.aegypti (EC(50)=0.55 nM) with a potency comparable to that of the endogenous ligand. Has no activity on receptors of the closely related neuropeptides adipokinetic hormone and corazonin. In vivo, does not reveal any observable effects when injected into crickets (A.domesticus). Does not induce increase in intracellular calcium in mouse DRG neurons, suggesting that it does not induce pain. In Doratifera vulnerans (Mottled cup moth), this protein is Z-limacoditoxin(1)-Dv1.